Here is a 197-residue protein sequence, read N- to C-terminus: Xanthine phosphoribosyltransferase (197 aa).

L20 and N27 together coordinate xanthine. 128–132 lines the 5-phospho-alpha-D-ribose 1-diphosphate pocket; that stretch reads ANGQA. Residue K156 participates in xanthine binding.

Belongs to the purine/pyrimidine phosphoribosyltransferase family. Xpt subfamily. As to quaternary structure, homodimer.

Its subcellular location is the cytoplasm. It carries out the reaction XMP + diphosphate = xanthine + 5-phospho-alpha-D-ribose 1-diphosphate. The protein operates within purine metabolism; XMP biosynthesis via salvage pathway; XMP from xanthine: step 1/1. In terms of biological role, converts the preformed base xanthine, a product of nucleic acid breakdown, to xanthosine 5'-monophosphate (XMP), so it can be reused for RNA or DNA synthesis. This is Xanthine phosphoribosyltransferase from Bacillus cereus (strain B4264).